The sequence spans 20 residues: Brevinin-1ITb (20 aa).

The residue at position 8 (Met-8) is a Methionine sulfoxide; partial. An intrachain disulfide couples Cys-14 to Cys-20.

This sequence belongs to the frog skin active peptide (FSAP) family. Brevinin subfamily. As to expression, expressed by the skin glands.

Its subcellular location is the secreted. Functionally, antimicrobial peptide. This Rana italica (Italian stream frog) protein is Brevinin-1ITb.